A 334-amino-acid polypeptide reads, in one-letter code: Fructose-1,6-bisphosphatase class 1 (334 aa).

4 residues coordinate Mg(2+): Glu89, Asp112, Leu114, and Asp115. Substrate is bound by residues 115–118, Asn208, Tyr241, and Lys271; that span reads DGSS. Glu277 is a Mg(2+) binding site.

The protein belongs to the FBPase class 1 family. In terms of assembly, homotetramer. Mg(2+) serves as cofactor.

It is found in the cytoplasm. It carries out the reaction beta-D-fructose 1,6-bisphosphate + H2O = beta-D-fructose 6-phosphate + phosphate. It participates in carbohydrate biosynthesis; gluconeogenesis. The protein is Fructose-1,6-bisphosphatase class 1 of Photorhabdus laumondii subsp. laumondii (strain DSM 15139 / CIP 105565 / TT01) (Photorhabdus luminescens subsp. laumondii).